The following is a 373-amino-acid chain: tRNA-specific 2-thiouridylase MnmA (373 aa).

ATP-binding positions include 12 to 19 and Met-38; that span reads GMSGGVDS. Residues 98 to 100 are interaction with target base in tRNA; it reads NPD. Residue Cys-103 is the Nucleophile of the active site. The cysteines at positions 103 and 200 are disulfide-linked. Gly-127 contributes to the ATP binding site. The segment at 150–152 is interaction with tRNA; the sequence is KDQ. The active-site Cysteine persulfide intermediate is the Cys-200. Positions 312–313 are interaction with tRNA; it reads RY.

This sequence belongs to the MnmA/TRMU family.

The protein resides in the cytoplasm. The catalysed reaction is S-sulfanyl-L-cysteinyl-[protein] + uridine(34) in tRNA + AH2 + ATP = 2-thiouridine(34) in tRNA + L-cysteinyl-[protein] + A + AMP + diphosphate + H(+). Its function is as follows. Catalyzes the 2-thiolation of uridine at the wobble position (U34) of tRNA, leading to the formation of s(2)U34. This chain is tRNA-specific 2-thiouridylase MnmA, found in Streptococcus agalactiae serotype III (strain NEM316).